A 204-amino-acid polypeptide reads, in one-letter code: MSAQDKLIKAQHLIDMNDIIREGNPTLRAVAKEVEFPLSDDDIILGEKMMQFLKHSQDPVMGEKLGLRAGVGLAAPQIDVSKRIIAVLVPNPEDSEGNPPKEAYSMEEVLYNPKIVSHSVQDAALADGEGCLSVDRVVEGYVVRHARVTVEYYDKHNEKHRIKLKGYNAIVVQHEIDHINGVLFYDRINAKKPFEAKEGMLILE.

2 residues coordinate Fe cation: Cys-131 and His-174. Glu-175 is a catalytic residue. A Fe cation-binding site is contributed by His-178.

The protein belongs to the polypeptide deformylase family. Requires Fe(2+) as cofactor.

The enzyme catalyses N-terminal N-formyl-L-methionyl-[peptide] + H2O = N-terminal L-methionyl-[peptide] + formate. Functionally, removes the formyl group from the N-terminal Met of newly synthesized proteins. Requires at least a dipeptide for an efficient rate of reaction. N-terminal L-methionine is a prerequisite for activity but the enzyme has broad specificity at other positions. The sequence is that of Peptide deformylase from Streptococcus equi subsp. zooepidemicus (strain H70).